Here is a 269-residue protein sequence, read N- to C-terminus: Small ribosomal subunit protein uS3 (269 aa).

The KH type-2 domain maps to 38 to 106 (IREWLHKNLE…QIQLNILEVK (69 aa)). The disordered stretch occupies residues 215 to 269 (AQKAARQAAQGGRGGRGGNRRGRGDRPDRRGGRRRAEAAKQSAETPAPQTENAGA). Residues 236–252 (GRGDRPDRRGGRRRAEA) show a composition bias toward basic and acidic residues. The segment covering 256 to 269 (SAETPAPQTENAGA) has biased composition (polar residues).

Belongs to the universal ribosomal protein uS3 family. As to quaternary structure, part of the 30S ribosomal subunit. Forms a tight complex with proteins S10 and S14.

Its function is as follows. Binds the lower part of the 30S subunit head. Binds mRNA in the 70S ribosome, positioning it for translation. This Cutibacterium acnes (strain DSM 16379 / KPA171202) (Propionibacterium acnes) protein is Small ribosomal subunit protein uS3.